A 117-amino-acid polypeptide reads, in one-letter code: NADH-ubiquinone oxidoreductase chain 3 (117 aa).

The next 3 membrane-spanning stretches (helical) occupy residues 4 to 24, 61 to 81, and 86 to 106; these read FLGILIYFFIALALSLLLLGL, LVAILFIIFDLEVAFLFPWAL, and IGYFGFWSMMLFLFILTVGFI.

This sequence belongs to the complex I subunit 3 family.

It localises to the mitochondrion membrane. The catalysed reaction is a ubiquinone + NADH + 5 H(+)(in) = a ubiquinol + NAD(+) + 4 H(+)(out). Functionally, core subunit of the mitochondrial membrane respiratory chain NADH dehydrogenase (Complex I) that is believed to belong to the minimal assembly required for catalysis. Complex I functions in the transfer of electrons from NADH to the respiratory chain. The immediate electron acceptor for the enzyme is believed to be ubiquinone. The protein is NADH-ubiquinone oxidoreductase chain 3 (NAD3) of Prototheca wickerhamii.